Here is a 385-residue protein sequence, read N- to C-terminus: Alkanesulfonate monooxygenase (385 aa).

The protein belongs to the SsuD family.

It carries out the reaction an alkanesulfonate + FMNH2 + O2 = an aldehyde + FMN + sulfite + H2O + 2 H(+). Functionally, catalyzes the desulfonation of aliphatic sulfonates. The chain is Alkanesulfonate monooxygenase from Burkholderia pseudomallei (strain 1710b).